Here is a 568-residue protein sequence, read N- to C-terminus: MTHSVEDIKSTSRRLRGSLEQSLADPVTGALREDDQTLIKYHGSYQQDDRDIRDERRRQKLEPAYQFMIRTRTPGGVISPSQWLALDGIATRYANHSLRITTRQAFQFHGVIKRELKATMQAINATLIDTLAACGDVNRNVQVAANPLLSQAHATLYADAARVSEHLLPNTRAYYEIWLDEERVSGSGAEDEPIYGDRYLPRKFKIGFAAPPHNDVDVFANDLGFIAILREGQLLGYNVSIGGGMGASHGDAETWPRVANVIGFVTGDQLLDIATAVVTTQRDLGNRAVRKRARFKYTIDDHGLDTIVAEIERRAGFSLQPAQPFAFAHNGDRYGWVEGEQGDWHLTLSLPAGRIADTDTAAHLSGLRAIAQLQMGEFRMTPNQNLVIAGVPAEQRAQIDQLVAQYGLDAGNLAPTALARGAMACVALPTCGLAMAEAERYLPDFSAALQPLLERHGLAQTPIVLRLSGCPNGCSRPYLAEIALVGKAPGRYNLMLGGDRRGQRLNTLYRENINEADILAALEPLLARYAAERDRHTDEGFGDFLHRSGLIALPPYPTHRHLDLELLA.

[4Fe-4S] cluster contacts are provided by C425, C431, C470, and C474. Residue C474 coordinates siroheme.

Belongs to the nitrite and sulfite reductase 4Fe-4S domain family. In terms of assembly, alpha(8)-beta(8). The alpha component is a flavoprotein, the beta component is a hemoprotein. It depends on siroheme as a cofactor. The cofactor is [4Fe-4S] cluster.

The catalysed reaction is hydrogen sulfide + 3 NADP(+) + 3 H2O = sulfite + 3 NADPH + 4 H(+). The protein operates within sulfur metabolism; hydrogen sulfide biosynthesis; hydrogen sulfide from sulfite (NADPH route): step 1/1. Functionally, component of the sulfite reductase complex that catalyzes the 6-electron reduction of sulfite to sulfide. This is one of several activities required for the biosynthesis of L-cysteine from sulfate. This is Sulfite reductase [NADPH] hemoprotein beta-component from Xanthomonas campestris pv. campestris (strain B100).